A 22-amino-acid polypeptide reads, in one-letter code: Bacteriocin serracin-P 23 kDa subunit (22 aa).

Its function is as follows. Major component of a prophage tail tube. Functionally, antibacterial activity against Gram-negative bacterium E.amylovora. The chain is Bacteriocin serracin-P 23 kDa subunit from Serratia plymuthica.